The sequence spans 493 residues: Matrilin-1 (493 aa).

Residues 1–23 form the signal peptide; sequence MDGIFCALPLSLLLLLQSCGVWG. The region spanning 24–220 is the VWFA 1 domain; that stretch reads APPQPRGTLC…THKFQEAFCV (197 aa). An N-linked (GlcNAc...) asparagine glycan is attached at Asn-74. The region spanning 221-261 is the EGF-like domain; that stretch reads VSDLCATGDHDCEQICISTPGSYKCACKEGFTLNNDGKTCS. 3 disulfides stabilise this stretch: Cys-225-Cys-236, Cys-232-Cys-245, and Cys-247-Cys-260. Positions 262-450 constitute a VWFA 2 domain; sequence ACSGGSGSAL…GKKLQMKICV (189 aa). Residues 462–492 adopt a coiled-coil conformation; that stretch reads KFQTKVEELINTLQQKLEAVAKRIEALENKI.

Homotrimer. As to expression, expressed in xyphoid cartilage and chondrocytes (at protein level).

It localises to the secreted. Its subcellular location is the extracellular space. The protein resides in the extracellular matrix. In terms of biological role, a major component of the extracellular matrix of non-articular cartilage. Binds to type 2 collagens and forms long concatenated protein networks as part of the extracellular matrix. Required for the network-like organization and bundling of collagen fibrils surrounding chondrocytes in the zones of maturation and hypertrophy. Required for mechanotransduction and adaption to mechanical loading in cartilage chondrocytes, resulting in an increase in expression of the extracellular matrix components ACAN and COL2A1. Acts as a moderator of angiogenesis in response to injury. This chain is Matrilin-1, found in Gallus gallus (Chicken).